The primary structure comprises 295 residues: Iron-sulfur cluster carrier protein (295 aa).

38–45 (GKGGVGKS) provides a ligand contact to ATP.

Belongs to the Mrp/NBP35 ATP-binding proteins family. As to quaternary structure, homodimer.

Binds and transfers iron-sulfur (Fe-S) clusters to target apoproteins. Can hydrolyze ATP. The protein is Iron-sulfur cluster carrier protein of Pyrococcus abyssi (strain GE5 / Orsay).